Consider the following 63-residue polypeptide: MNFNKVFILVAIVIAIFAGQTEAGWLKKIGKKIERVGQHTRDATIQTIAVAQQAANVAATARG.

A signal peptide spans 1 to 21 (MNFNKVFILVAIVIAIFAGQT). The propeptide occupies 22–23 (EA). Position 62 is an arginine amide (R62).

The protein belongs to the cecropin family.

The protein resides in the secreted. In terms of biological role, cecropins have lytic and antibacterial activity against several Gram-positive and Gram-negative bacteria. The sequence is that of Cecropin-1 (CEC1) from Ceratitis capitata (Mediterranean fruit fly).